The primary structure comprises 181 residues: SecB-like chaperone Rv1957 (181 aa).

The residue at position 2 (threonine 2) is an N-acetylthreonine.

The protein belongs to the SecB-like family. In terms of assembly, homotetramer, interacts with antitoxin HigA1.

Functionally, chaperone component of an atypical, type II toxin-antitoxin chaperone (TAC) system. Prevents antitoxin HigA1 aggregation in vitro at a 1:3 chaperone:antitoxin ratio, probably also protects antitoxin HigA1 from protease. Required for neutralization of toxin HigB1 upon ectopic expression in Mycobacterium marinum or E.coli. When expressed in E.coli complements a secB deletion, restores export of OmpA and MBP and inhibits aggregation of proOmpC although it is less efficient than endogenous SecB. Complements the general chaperone function of E.coli SecB less well. The protein is SecB-like chaperone Rv1957 (secBL) of Mycobacterium tuberculosis (strain ATCC 25618 / H37Rv).